Here is an 86-residue protein sequence, read N- to C-terminus: UPF0147 protein PYRAB16980 (86 aa).

The protein belongs to the UPF0147 family.

The polypeptide is UPF0147 protein PYRAB16980 (Pyrococcus abyssi (strain GE5 / Orsay)).